The sequence spans 198 residues: RxLR effector protein CRE4 (198 aa).

The first 20 residues, 1–20 (MLRSFLLIVATVSLFGQCKP), serve as a signal peptide directing secretion. A RxLR-dEER motif is present at residues 43–52 (RFVRTNDEER).

The protein belongs to the RxLR effector family.

It is found in the secreted. The protein localises to the host cytoplasm. The protein resides in the host nucleus. It localises to the host nucleolus. In terms of biological role, effector that is involved in host plant infection. Contributes to virulence during the early infection stage, by inhibiting plant defense responses induced by both PAMP-triggered immunity (PTI) and effector-triggered immunity (ETI). This is RxLR effector protein CRE4 (CRE4) from Phytophthora infestans (strain T30-4) (Potato late blight agent).